The primary structure comprises 223 residues: Riboflavin kinase (223 aa).

The segment at 1–89 is unknown; the sequence is MHRINALKHL…KHIFCGDEDK (89 aa). The riboflavin kinase stretch occupies residues 90-223; that stretch reads VELYGNVITG…IMIEDRSACE (134 aa). 99 to 104 contacts CDP; the sequence is GLGEGQ. Mg(2+) contacts are provided by Thr-128 and Asn-130. FMN contacts are provided by Ser-185 and Glu-193. CDP is bound at residue 198 to 201; sequence VHLR.

This sequence belongs to the archaeal riboflavin kinase family. Requires Mg(2+) as cofactor.

The enzyme catalyses riboflavin + CTP = CDP + FMN + H(+). Its pathway is cofactor biosynthesis; FMN biosynthesis; FMN from riboflavin (CTP route): step 1/1. Functionally, catalyzes the CTP-dependent phosphorylation of riboflavin (vitamin B2) to form flavin mononucleotide (FMN). The protein is Riboflavin kinase (ribK) of Methanococcoides burtonii (strain DSM 6242 / NBRC 107633 / OCM 468 / ACE-M).